Consider the following 548-residue polypeptide: Probable malate:quinone oxidoreductase (548 aa).

A disordered region spans residues 521–548 (DKPQAADSTPKPQLKPQPVQKEVADIAL). Low complexity predominate over residues 530–541 (PKPQLKPQPVQK).

Belongs to the MQO family. Requires FAD as cofactor.

It catalyses the reaction (S)-malate + a quinone = a quinol + oxaloacetate. It functions in the pathway carbohydrate metabolism; tricarboxylic acid cycle; oxaloacetate from (S)-malate (quinone route): step 1/1. The chain is Probable malate:quinone oxidoreductase from Escherichia coli O17:K52:H18 (strain UMN026 / ExPEC).